The following is a 50-amino-acid chain: Sperm protamine P1 (50 aa).

The protein belongs to the protamine P1 family. As to expression, testis.

Its subcellular location is the nucleus. The protein resides in the chromosome. Protamines substitute for histones in the chromatin of sperm during the haploid phase of spermatogenesis. They compact sperm DNA into a highly condensed, stable and inactive complex. The sequence is that of Sperm protamine P1 (PRM1) from Trachypithecus vetulus (Purple-faced langur).